Consider the following 275-residue polypeptide: Exosome complex component Rrp42 (275 aa).

This sequence belongs to the RNase PH family. Rrp42 subfamily. As to quaternary structure, component of the archaeal exosome complex. Forms a hexameric ring-like arrangement composed of 3 Rrp41-Rrp42 heterodimers. The hexameric ring associates with a trimer of Rrp4 and/or Csl4 subunits.

It is found in the cytoplasm. Its function is as follows. Non-catalytic component of the exosome, which is a complex involved in RNA degradation. Contributes to the structuring of the Rrp41 active site. In Saccharolobus islandicus (strain Y.N.15.51 / Yellowstone #2) (Sulfolobus islandicus), this protein is Exosome complex component Rrp42.